The chain runs to 155 residues: Endoribonuclease YbeY (155 aa).

3 residues coordinate Zn(2+): His114, His118, and His124.

It belongs to the endoribonuclease YbeY family. The cofactor is Zn(2+).

Its subcellular location is the cytoplasm. Single strand-specific metallo-endoribonuclease involved in late-stage 70S ribosome quality control and in maturation of the 3' terminus of the 16S rRNA. The protein is Endoribonuclease YbeY of Salmonella arizonae (strain ATCC BAA-731 / CDC346-86 / RSK2980).